The sequence spans 376 residues: Chaperone protein DnaJ (376 aa).

The J domain maps to D5 to G70. The CR-type zinc finger occupies G131–S209. 8 residues coordinate Zn(2+): C144, C147, C161, C164, C183, C186, C197, and C200. 4 CXXCXGXG motif repeats span residues C144 to G151, C161 to G168, C183 to G190, and C197 to G204.

It belongs to the DnaJ family. Homodimer. Zn(2+) is required as a cofactor.

It localises to the cytoplasm. In terms of biological role, participates actively in the response to hyperosmotic and heat shock by preventing the aggregation of stress-denatured proteins and by disaggregating proteins, also in an autonomous, DnaK-independent fashion. Unfolded proteins bind initially to DnaJ; upon interaction with the DnaJ-bound protein, DnaK hydrolyzes its bound ATP, resulting in the formation of a stable complex. GrpE releases ADP from DnaK; ATP binding to DnaK triggers the release of the substrate protein, thus completing the reaction cycle. Several rounds of ATP-dependent interactions between DnaJ, DnaK and GrpE are required for fully efficient folding. Also involved, together with DnaK and GrpE, in the DNA replication of plasmids through activation of initiation proteins. The chain is Chaperone protein DnaJ from Escherichia coli O157:H7 (strain EC4115 / EHEC).